We begin with the raw amino-acid sequence, 73 residues long: Cell division protein ZapB (73 aa).

Residues 3–67 (LELLSKLETK…WNDKVTGLVG (65 aa)) adopt a coiled-coil conformation.

The protein belongs to the ZapB family. As to quaternary structure, homodimer. The ends of the coiled-coil dimer bind to each other, forming polymers. Interacts with FtsZ.

It localises to the cytoplasm. In terms of biological role, non-essential, abundant cell division factor that is required for proper Z-ring formation. It is recruited early to the divisome by direct interaction with FtsZ, stimulating Z-ring assembly and thereby promoting cell division earlier in the cell cycle. Its recruitment to the Z-ring requires functional FtsA or ZipA. This chain is Cell division protein ZapB, found in Shewanella sp. (strain ANA-3).